Consider the following 474-residue polypeptide: ATP synthase subunit beta (474 aa).

151-158 (GGAGVGKT) is a binding site for ATP.

Belongs to the ATPase alpha/beta chains family. F-type ATPases have 2 components, CF(1) - the catalytic core - and CF(0) - the membrane proton channel. CF(1) has five subunits: alpha(3), beta(3), gamma(1), delta(1), epsilon(1). CF(0) has four main subunits: a(1), b(1), b'(1) and c(9-12).

The protein resides in the cell inner membrane. The enzyme catalyses ATP + H2O + 4 H(+)(in) = ADP + phosphate + 5 H(+)(out). Its function is as follows. Produces ATP from ADP in the presence of a proton gradient across the membrane. The catalytic sites are hosted primarily by the beta subunits. This Roseobacter denitrificans (strain ATCC 33942 / OCh 114) (Erythrobacter sp. (strain OCh 114)) protein is ATP synthase subunit beta.